We begin with the raw amino-acid sequence, 302 residues long: Homoserine O-acetyltransferase (302 aa).

C142 functions as the Acyl-thioester intermediate in the catalytic mechanism. Substrate contacts are provided by K163 and S192. H235 acts as the Proton acceptor in catalysis. The active site involves E237. Substrate is bound at residue R249.

Belongs to the MetA family.

It is found in the cytoplasm. It catalyses the reaction L-homoserine + acetyl-CoA = O-acetyl-L-homoserine + CoA. Its pathway is amino-acid biosynthesis; L-methionine biosynthesis via de novo pathway; O-acetyl-L-homoserine from L-homoserine: step 1/1. Its function is as follows. Transfers an acetyl group from acetyl-CoA to L-homoserine, forming acetyl-L-homoserine. The polypeptide is Homoserine O-acetyltransferase (Clostridium novyi (strain NT)).